A 648-amino-acid polypeptide reads, in one-letter code: Solute carrier family 23 member 2 (648 aa).

The interval methionine 1–glycine 21 is disordered. Topologically, residues alanine 9–tyrosine 110 are cytoplasmic. Serine 70 carries the post-translational modification Phosphoserine. Threonine 75 carries the post-translational modification Phosphothreonine. At serine 78 the chain carries Phosphoserine. A Phosphothreonine modification is found at threonine 79. Serine 81 is subject to Phosphoserine. A helical membrane pass occupies residues leucine 111–glycine 131. Residues aspartate 132 to glutamine 139 are Extracellular-facing. The helical transmembrane segment at leucine 140–cysteine 160 threads the bilayer. Position 161 (arginine 161) is a topological domain, cytoplasmic. The chain crosses the membrane as a helical span at residues leucine 162–leucine 182. At aspartate 183–alanine 216 the chain is on the extracellular side. Residues asparagine 188 and asparagine 196 are each glycosylated (N-linked (GlcNAc...) asparagine). A helical transmembrane segment spans residues isoleucine 217 to leucine 237. Over arginine 238–alanine 264 the chain is Cytoplasmic. The chain crosses the membrane as a helical span at residues glycine 265 to serine 282. The Extracellular portion of the chain corresponds to glutamine 283–arginine 286. Residues asparagine 287–glycine 300 constitute an intramembrane region (helical). At tryptophan 301 to glutamine 307 the chain is on the extracellular side. Residues leucine 308–phenylalanine 328 form a helical membrane-spanning segment. Residues threonine 329–glycine 369 lie on the Cytoplasmic side of the membrane. Residues methionine 370–isoleucine 390 form a helical membrane-spanning segment. At glutamate 391–arginine 415 the chain is on the extracellular side. The chain crosses the membrane as a helical span at residues glycine 416–serine 436. At threonine 437 to tyrosine 459 the chain is on the cytoplasmic side. Residues glycine 460–leucine 480 form a helical membrane-spanning segment. Topologically, residues proline 481–proline 483 are extracellular. A helical transmembrane segment spans residues valine 484–leucine 504. Over glutamine 505–asparagine 514 the chain is Cytoplasmic. Residues leucine 515 to asparagine 535 traverse the membrane as a helical segment. Residues proline 536 to aspartate 545 lie on the Extracellular side of the membrane. Residues glutamine 546–leucine 566 traverse the membrane as a helical segment. The Cytoplasmic portion of the chain corresponds to aspartate 567–valine 648. At threonine 647 the chain carries Phosphothreonine.

This sequence belongs to the nucleobase:cation symporter-2 (NCS2) (TC 2.A.40) family. In terms of assembly, interacts with CLSTN3. Post-translationally, phosphorylated. As to expression, expressed in metabolically active and specialized tissues, including high expression in brain and adrenals. Detected in a wide range of tissues. Expression in kidney is almost undetectable.

The protein resides in the cell membrane. It catalyses the reaction L-ascorbate(out) + 2 Na(+)(out) = L-ascorbate(in) + 2 Na(+)(in). Its function is as follows. Sodium/ascorbate cotransporter. Mediates electrogenic uptake of vitamin C, with a stoichiometry of 2 Na(+) for each ascorbate. The chain is Solute carrier family 23 member 2 (Slc23a2) from Mus musculus (Mouse).